The primary structure comprises 251 residues: Triosephosphate isomerase (251 aa).

Substrate is bound at residue 9–11 (NWK). His-95 functions as the Electrophile in the catalytic mechanism. Glu-167 acts as the Proton acceptor in catalysis. Substrate is bound by residues Gly-173, Ser-213, and 234–235 (GG). Residue Ser-213 is modified to Phosphoserine.

Belongs to the triosephosphate isomerase family. Homodimer.

It localises to the cytoplasm. The catalysed reaction is D-glyceraldehyde 3-phosphate = dihydroxyacetone phosphate. The protein operates within carbohydrate biosynthesis; gluconeogenesis. Its pathway is carbohydrate degradation; glycolysis; D-glyceraldehyde 3-phosphate from glycerone phosphate: step 1/1. Functionally, involved in the gluconeogenesis. Catalyzes stereospecifically the conversion of dihydroxyacetone phosphate (DHAP) to D-glyceraldehyde-3-phosphate (G3P). This chain is Triosephosphate isomerase, found in Halalkalibacterium halodurans (strain ATCC BAA-125 / DSM 18197 / FERM 7344 / JCM 9153 / C-125) (Bacillus halodurans).